The primary structure comprises 255 residues: 28.1 kDa virulence protein (255 aa).

The protein belongs to the SpvA family.

Its function is as follows. Not known. This protein is involved in the virulence of salmonellas. This is 28.1 kDa virulence protein (mkaB) from Salmonella typhimurium.